Here is a 527-residue protein sequence, read N- to C-terminus: Putative WEB family protein At4g17210 (527 aa).

Disordered regions lie at residues 1–28 (MAKI…IDTR) and 46–70 (FSKK…TDVS). Over residues 55-68 (SSSSSSQSQDTTTD) the composition is skewed to low complexity. 3 coiled-coil regions span residues 95–159 (AAKA…YILI), 202–389 (SNKI…AKHM), and 436–513 (KKIR…EAHS).

It belongs to the WEB family.

This Arabidopsis thaliana (Mouse-ear cress) protein is Putative WEB family protein At4g17210.